Reading from the N-terminus, the 299-residue chain is Coenzyme PQQ synthesis protein B (299 aa).

Belongs to the PqqB family.

The protein operates within cofactor biosynthesis; pyrroloquinoline quinone biosynthesis. May be involved in the transport of PQQ or its precursor to the periplasm. This is Coenzyme PQQ synthesis protein B from Methylorubrum populi (strain ATCC BAA-705 / NCIMB 13946 / BJ001) (Methylobacterium populi).